The sequence spans 117 residues: Large ribosomal subunit protein uL18 (117 aa).

This sequence belongs to the universal ribosomal protein uL18 family. As to quaternary structure, part of the 50S ribosomal subunit; part of the 5S rRNA/L5/L18/L25 subcomplex. Contacts the 5S and 23S rRNAs.

This is one of the proteins that bind and probably mediate the attachment of the 5S RNA into the large ribosomal subunit, where it forms part of the central protuberance. In Edwardsiella ictaluri (strain 93-146), this protein is Large ribosomal subunit protein uL18.